The sequence spans 377 residues: Protein-tyrosine sulfotransferase 2 (377 aa).

The Cytoplasmic portion of the chain corresponds to 1 to 8; sequence MRLSMRRA. A helical; Signal-anchor for type II membrane protein membrane pass occupies residues 9–25; sequence LLAAGLALALVLAVHLG. At 26 to 377 the chain is on the lumenal side; the sequence is QRVLECQAVL…NSTSSHLGSS (352 aa). 3'-phosphoadenylyl sulfate is bound at residue 78-82; that stretch reads RSGTT. Cys96 and Cys156 form a disulfide bridge. Catalysis depends on Glu99, which acts as the Proton donor/acceptor. An interaction with peptide substrate region spans residues 101–105; that stretch reads RIIPR. The 3'-phosphoadenylyl sulfate site is built by Arg183, Ser191, and Arg195. The cysteines at positions 225 and 233 are disulfide-linked. 3'-phosphoadenylyl sulfate-binding positions include Tyr238, 285–294, and Lys300; that span reads STDQVIKPVN. N-linked (GlcNAc...) asparagine glycosylation is found at Asn343 and Asn368.

This sequence belongs to the protein sulfotransferase family. As to quaternary structure, homodimer. Can also form heterodimers with TPST1. N-glycosylated.

It is found in the golgi apparatus membrane. It carries out the reaction L-tyrosyl-[protein] + 3'-phosphoadenylyl sulfate = O-sulfo-L-tyrosine-[protein] + adenosine 3',5'-bisphosphate + H(+). Functionally, catalyzes the O-sulfation of tyrosine residues within acidic motifs of polypeptides, using 3'-phosphoadenylyl sulfate (PAPS) as cosubstrate. This chain is Protein-tyrosine sulfotransferase 2 (TPST2), found in Bos taurus (Bovine).